The chain runs to 285 residues: Lipoyl synthase (285 aa).

Residues Cys36, Cys41, Cys47, Cys62, Cys66, Cys69, and Ser275 each coordinate [4Fe-4S] cluster. Residues 48-264 (FSKKTATFLI…KEYAISIGFK (217 aa)) enclose the Radical SAM core domain.

The protein belongs to the radical SAM superfamily. Lipoyl synthase family. It depends on [4Fe-4S] cluster as a cofactor.

It localises to the cytoplasm. It catalyses the reaction [[Fe-S] cluster scaffold protein carrying a second [4Fe-4S](2+) cluster] + N(6)-octanoyl-L-lysyl-[protein] + 2 oxidized [2Fe-2S]-[ferredoxin] + 2 S-adenosyl-L-methionine + 4 H(+) = [[Fe-S] cluster scaffold protein] + N(6)-[(R)-dihydrolipoyl]-L-lysyl-[protein] + 4 Fe(3+) + 2 hydrogen sulfide + 2 5'-deoxyadenosine + 2 L-methionine + 2 reduced [2Fe-2S]-[ferredoxin]. It participates in protein modification; protein lipoylation via endogenous pathway; protein N(6)-(lipoyl)lysine from octanoyl-[acyl-carrier-protein]: step 2/2. Functionally, catalyzes the radical-mediated insertion of two sulfur atoms into the C-6 and C-8 positions of the octanoyl moiety bound to the lipoyl domains of lipoate-dependent enzymes, thereby converting the octanoylated domains into lipoylated derivatives. The sequence is that of Lipoyl synthase from Caldicellulosiruptor saccharolyticus (strain ATCC 43494 / DSM 8903 / Tp8T 6331).